The sequence spans 183 residues: MALKIAVVVGSLRRDSFNKQLAHALASLAPSDFSFDFVDIGGLPLYSQDYDSDFPEVARAFKQQIADADGLLIVTPEYNRSMPGVLKNALDWASRPWGQSVWGGKPGAIIGTSVGAIGTAIAQSHLRGVCAYLDIVLMNQPEMYIKHDESRIDANGNIVSEDTRKYLQTFMDKYAAWVRDRRV.

Residues 11 to 18 (SLRRDSFN), 77 to 80 (EYNR), and Ser113 contribute to the FMN site.

Belongs to the SsuE family. Homotetramer. FMN is required as a cofactor.

It carries out the reaction 2-hydroxy-1,4-benzoquinone + NADH + 2 H(+) = benzene-1,2,4-triol + NAD(+). Involved in the metabolism of 4-aminophenol. Catalyzes the reduction of the auto-oxidation product 2-hydroxy-1,4-benzoquinone back to hydroxyquinol. Has a broad substrate specificity toward benzoquinones, converting them to the corresponding 1,4-benzenediols. The sequence is that of 2-hydroxy-1,4-benzoquinone reductase from Burkholderia sp.